Here is a 379-residue protein sequence, read N- to C-terminus: Tryptophan 2,3-dioxygenase (379 aa).

Substrate contacts are provided by residues 57 to 61 and arginine 128; that span reads FIITH. A heme-binding site is contributed by histidine 312. Substrate is bound at residue threonine 327.

Belongs to the tryptophan 2,3-dioxygenase family. As to quaternary structure, homotetramer. Dimer of dimers. Heme serves as cofactor.

The enzyme catalyses L-tryptophan + O2 = N-formyl-L-kynurenine. It functions in the pathway amino-acid degradation; L-tryptophan degradation via kynurenine pathway; L-kynurenine from L-tryptophan: step 1/2. The protein operates within pigment biosynthesis; ommochrome biosynthesis. In terms of biological role, heme-dependent dioxygenase that catalyzes the oxidative cleavage of the L-tryptophan (L-Trp) pyrrole ring and converts L-tryptophan to N-formyl-L-kynurenine. Catalyzes the oxidative cleavage of the indole moiety. This is Tryptophan 2,3-dioxygenase from Drosophila sechellia (Fruit fly).